Reading from the N-terminus, the 1837-residue chain is AF4/FMR2 family member lilli (1837 aa).

9 disordered regions span residues 1-25 (MAQQ…QQQQ), 65-109 (NLYS…PRRL), 162-295 (IQQQ…LHNG), 455-592 (QQLP…KKKY), 605-712 (TGLL…PGNV), 797-852 (PKSQ…LQIP), 868-1250 (NNMQ…GGAK), 1267-1311 (QQQQ…GLAS), and 1344-1466 (APSS…DPML). Residues 16–25 (HQQQQQQQQQ) are compositionally biased toward low complexity. Basic and acidic residues predominate over residues 84-109 (REKYERQQGIQSDDRETSLFSEPRRL). Composition is skewed to low complexity over residues 162 to 179 (IQQQ…VASS), 187 to 200 (QTQQ…QQQQ), and 247 to 264 (NSNS…SSSS). Threonine 468 is subject to Phosphothreonine. The span at 475-488 (LKIEKNPILEKQDS) shows a compositional bias: basic and acidic residues. A compositionally biased stretch (acidic residues) spans 490–500 (LENDLELSESE). Phosphoserine is present on residues serine 497 and serine 499. Composition is skewed to low complexity over residues 509–529 (SPGS…SESS) and 542–552 (QQQQQTQQQQL). Residues 553 to 563 (HGHHPQSHHHQ) show a composition bias toward basic residues. The segment covering 564 to 583 (QFLQQQLQRQQQQQQQQQQL) has biased composition (low complexity). Composition is skewed to gly residues over residues 612 to 633 (GGLG…GNGG) and 641 to 673 (GSMG…GIGS). Polar residues-rich tracts occupy residues 678–690 (NKTP…NKWN) and 698–711 (PTSQ…SPGN). Over residues 815-837 (SESATSGSSSSSCSSSDSAASAS) the composition is skewed to low complexity. A compositionally biased stretch (polar residues) spans 868 to 880 (NNMQKSQSMSVTV). The segment covering 892–902 (PRQKKPRKKKM) has biased composition (basic residues). Serine 913 and serine 914 each carry phosphoserine. Composition is skewed to low complexity over residues 927 to 951 (VVAQ…ATTT) and 961 to 1013 (QQQQ…SSVL). The a.T hook DNA-binding region spans 952 to 964 (KKGRGRPRKQQQQ). Residues serine 974 and serine 976 each carry the phosphoserine modification. Residues 1021–1033 (SQSSSNGNTPTKK) are compositionally biased toward polar residues. Low complexity-rich tracts occupy residues 1034-1049 (MSSI…SAAA), 1056-1091 (AVAA…SSSS), 1130-1139 (GSSSPTSSSS), and 1157-1173 (ISNS…VNNN). Residues 1174–1184 (LQQQAMPQQSP) are compositionally biased toward polar residues. The span at 1189–1212 (LSGGSQQLSSSDSSSSSSGSSSSS) shows a compositional bias: low complexity. Residues 1217–1234 (DAKREKNRERKPKSDKNK) show a composition bias toward basic and acidic residues. A compositionally biased stretch (low complexity) spans 1267 to 1276 (QQQQQQQQVQ). Over residues 1345-1355 (PSSSNQQNGHL) the composition is skewed to polar residues. Basic residues predominate over residues 1373–1386 (KVKHEHHQLHHHSQ). 2 stretches are compositionally biased toward basic and acidic residues: residues 1393–1407 (VKPE…ETKF) and 1416–1432 (FQLK…ERDQ). At serine 1517 the chain carries Phosphoserine. The segment covering 1550–1560 (AVQTTPPTSVT) has biased composition (polar residues). Disordered stretches follow at residues 1550–1571 (AVQT…LVSQ) and 1727–1756 (GNTP…IVPQ). Positions 1727–1747 (GNTPSSISPSNSVGSQGSGSN) are enriched in low complexity.

It belongs to the AF4 family.

The protein resides in the nucleus. Has a role in transcriptional regulation. Acts in parallel with the Ras/MAPK and the PI3K/PKB pathways in the control of cell identity and cellular growth. Essential for regulation of the cytoskeleton and cell growth but not for cell proliferation or growth rate. Required specifically for the microtubule-based basal transport of lipid droplets. Plays a partially redundant function downstream of Raf in cell fate specification in the developing eye. Pair-rule protein that regulates embryonic cellularization, gastrulation and segmentation. The sequence is that of AF4/FMR2 family member lilli from Drosophila willistoni (Fruit fly).